The following is a 483-amino-acid chain: CBL-interacting serine/threonine-protein kinase 19 (483 aa).

Residues 28 to 282 form the Protein kinase domain; that stretch reads YEMGRLLGHG…MPDIMETSWF (255 aa). ATP-binding positions include 34–42 and Lys57; that span reads LGHGTFAKV. The active-site Proton acceptor is the Asp150. An activation loop region spans residues 168–197; the sequence is DFGLSAVSDQIRQDGLFHTFCGTPAYVAPE. Position 172 is a phosphoserine (Ser172). The residue at position 186 (Thr186) is a Phosphothreonine. The segment covering 313–322 has biased composition (polar residues); that stretch reads SVSGRSSTVS. The disordered stretch occupies residues 313–338; that stretch reads SVSGRSSTVSEPEDFESFDGRRRGGS. An NAF domain is found at 340-364; sequence PRPASLNAFDLISFSPGFDLSGLFE. Positions 367-396 are PPI; sequence GEGSRFVSGAPVGQIISKLEEIARIVSFTV. The disordered stretch occupies residues 459 to 483; the sequence is NLSSENGQRVSGSRSLPSFLLSDTD.

The protein belongs to the protein kinase superfamily. CAMK Ser/Thr protein kinase family. SNF1 subfamily. Requires Mn(2+) as cofactor.

It catalyses the reaction L-seryl-[protein] + ATP = O-phospho-L-seryl-[protein] + ADP + H(+). The catalysed reaction is L-threonyl-[protein] + ATP = O-phospho-L-threonyl-[protein] + ADP + H(+). CIPK serine-threonine protein kinases interact with CBL proteins. Binding of a CBL protein to the regulatory NAF domain of CIPK protein lead to the activation of the kinase in a calcium-dependent manner. The polypeptide is CBL-interacting serine/threonine-protein kinase 19 (CIPK19) (Arabidopsis thaliana (Mouse-ear cress)).